Reading from the N-terminus, the 1296-residue chain is Clustered mitochondria protein homolog (1296 aa).

The segment at 1-31 (MTLMNGDGAHEHQAEAEPKQNGHEMGDQTEE) is disordered. Residues 8-26 (GAHEHQAEAEPKQNGHEMG) show a composition bias toward basic and acidic residues. The Clu domain maps to 333–575 (RAEDAYTSRL…RTFPPDLNFL (243 aa)). Residues 662–689 (LDGEAQLKQLEETMAAHKETVDTRSKEV) are a coiled coil. TPR repeat units follow at residues 970–1003 (AFHF…FNNV), 1012–1045 (CACL…SERI), 1096–1129 (ALLD…NSKY), and 1138–1171 (ALSH…YKNQ). A coiled-coil region spans residues 1242–1274 (QKDLEHLKAEVQRRQQLQEAIKGAENHEAKTKE). Positions 1261–1296 (AIKGAENHEAKTKEPEMSETSDSNINAASVAPESSD) are disordered. Basic and acidic residues predominate over residues 1263-1276 (KGAENHEAKTKEPE). Residues 1278-1296 (SETSDSNINAASVAPESSD) are compositionally biased toward polar residues.

The protein belongs to the CLU family.

The protein localises to the cytoplasm. It is found in the cytoplasmic granule. Its function is as follows. mRNA-binding protein involved in proper cytoplasmic distribution of mitochondria. Specifically binds mRNAs of nuclear-encoded mitochondrial proteins in the cytoplasm and regulates transport or translation of these transcripts close to mitochondria, playing a role in mitochondrial biogenesis. The protein is Clustered mitochondria protein homolog of Xenopus tropicalis (Western clawed frog).